We begin with the raw amino-acid sequence, 343 residues long: Anthranilate 1,2-dioxygenase electron transfer component (343 aa).

The 2Fe-2S ferredoxin-type domain maps to 3–96 (HSVALNFADG…NAAFYFDHHS (94 aa)). [2Fe-2S] cluster is bound by residues C40, C45, C48, and C80. Residues 98 to 338 (ICNAGETLKI…HIYSEKFLQS (241 aa)) form a ferredoxin-reductase region. The region spanning 103 to 206 (ETLKIATVVT…EAPLGSFYLR (104 aa)) is the FAD-binding FR-type domain.

Belongs to the bacterial ring-hydroxylating dioxygenase ferredoxin reductase family. As to quaternary structure, monomer. It is part of the anthranilate dioxygenase two component enzyme system. The other component is an oxygenase component consisting of 3 large (AntA) and 3 small (AntB) subunits. Requires FAD as cofactor. It depends on [2Fe-2S] cluster as a cofactor.

The catalysed reaction is 2 reduced [2Fe-2S]-[ferredoxin] + NAD(+) + H(+) = 2 oxidized [2Fe-2S]-[ferredoxin] + NADH. It participates in aromatic compound metabolism; anthranilate degradation via hydroxylation; catechol from anthranilate: step 1/1. Functionally, electron transfer component of anthranilate 1,2-dioxygenase system. In Acinetobacter baylyi (strain ATCC 33305 / BD413 / ADP1), this protein is Anthranilate 1,2-dioxygenase electron transfer component.